Consider the following 447-residue polypeptide: Kynurenine 3-monooxygenase (447 aa).

Belongs to the aromatic-ring hydroxylase family. KMO subfamily. Requires FAD as cofactor.

The catalysed reaction is L-kynurenine + NADPH + O2 + H(+) = 3-hydroxy-L-kynurenine + NADP(+) + H2O. The protein operates within cofactor biosynthesis; NAD(+) biosynthesis; quinolinate from L-kynurenine: step 1/3. In terms of biological role, catalyzes the hydroxylation of L-kynurenine (L-Kyn) to form 3-hydroxy-L-kynurenine (L-3OHKyn). Required for synthesis of quinolinic acid. The chain is Kynurenine 3-monooxygenase from Flavobacterium psychrophilum (strain ATCC 49511 / DSM 21280 / CIP 103535 / JIP02/86).